We begin with the raw amino-acid sequence, 43 residues long: Potassium channel toxin gamma-KTx 3.3 (43 aa).

4 disulfide bridges follow: Cys5–Cys23, Cys11–Cys34, Cys20–Cys39, and Cys24–Cys41.

The protein belongs to the ergtoxin family. Gamma-KTx 3 subfamily. As to expression, expressed by the venom gland.

Its subcellular location is the secreted. In terms of biological role, blocks Kv11/ERG potassium channels. The polypeptide is Potassium channel toxin gamma-KTx 3.3 (Centruroides sculpturatus (Arizona bark scorpion)).